The following is a 335-amino-acid chain: 2-acylglycerol O-acyltransferase 1 (335 aa).

The next 2 helical transmembrane spans lie at 18–38 and 40–60; these read TVAV…SIGI and VMLI…WLYF. Asn-121 and Asn-125 each carry an N-linked (GlcNAc...) asparagine glycan. The chain crosses the membrane as a helical span at residues 132 to 152; the sequence is LFPGFTSYLHVLPLWFWCPVF. The N-linked (GlcNAc...) asparagine glycan is linked to Asn-180.

Belongs to the diacylglycerol acyltransferase family. As to expression, expressed in stomach and liver.

It localises to the endoplasmic reticulum membrane. The catalysed reaction is a 2-acylglycerol + an acyl-CoA = a 1,2-diacylglycerol + CoA. It carries out the reaction 2-(9Z-octadecenoyl)-glycerol + butanoyl-CoA = 1-butanoyl-2-(9Z-octadecenoyl)-glycerol + CoA. It catalyses the reaction 2-(9Z-octadecenoyl)-glycerol + octanoyl-CoA = 1-octanoyl-2-(9Z-octadecenoyl)-glycerol + CoA. The enzyme catalyses 2-(9Z-octadecenoyl)-glycerol + dodecanoyl-CoA = 1-dodecanoyl-2-(9Z-octadecenoyl)-glycerol + CoA. The catalysed reaction is 2-(9Z-octadecenoyl)-glycerol + tetradecanoyl-CoA = 1-tetradecanoyl-2-(9Z-octadecenoyl)-glycerol + CoA. It carries out the reaction 2-(9Z-octadecenoyl)-glycerol + hexadecanoyl-CoA = 1-hexadecanoyl-2-(9Z-octadecenoyl)-glycerol + CoA. It catalyses the reaction 2-(9Z-octadecenoyl)-glycerol + octadecanoyl-CoA = 1-octadecanoyl-2-(9Z-octadecenoyl)-glycerol + CoA. The enzyme catalyses eicosanoyl-CoA + 2-(9Z-octadecenoyl)-glycerol = 1-eicosanoyl-2-(9Z-octadecenoyl)-glycerol + CoA. The catalysed reaction is 2-(9Z-octadecenoyl)-glycerol + (9Z)-octadecenoyl-CoA = 1,2-di-(9Z-octadecenoyl)-glycerol + CoA. It carries out the reaction 2-(9Z-octadecenoyl)-glycerol + (9Z,12Z)-octadecadienoyl-CoA = 1-(9Z,12Z-octadecadienoyl)-2-(9Z-octadecenoyl)-glycerol + CoA. It catalyses the reaction 2-(9Z-octadecenoyl)-glycerol + (5Z,8Z,11Z,14Z)-eicosatetraenoyl-CoA = 1-(5Z,8Z,11Z,14Z-eicosatetraenoyl)-2-(9Z-octadecenoyl)-glycerol + CoA. The enzyme catalyses a 2-acylglycerol + an acyl-CoA = a 1,2-diacyl-sn-glycerol + CoA. The catalysed reaction is a 2-acylglycerol + an acyl-CoA = a 2,3-diacyl-sn-glycerol + CoA. It carries out the reaction a 1-acylglycerol + an acyl-CoA = a 1,2-diacylglycerol + CoA. It catalyses the reaction 1-dodecanoylglycerol + (9Z)-octadecenoyl-CoA = 1-dodecanoyl-2-(9Z-octadecenoyl)-glycerol + CoA. The enzyme catalyses 1-tetradecanoylglycerol + (9Z)-octadecenoyl-CoA = 1-tetradecanoyl-2-(9Z-octadecenoyl)-glycerol + CoA. The catalysed reaction is 1-hexadecanoylglycerol + (9Z)-octadecenoyl-CoA = 1-hexadecanoyl-2-(9Z-octadecenoyl)-glycerol + CoA. It carries out the reaction 1-(9Z-octadecenoyl)-glycerol + (9Z)-octadecenoyl-CoA = 1,2-di-(9Z-octadecenoyl)-glycerol + CoA. It catalyses the reaction 1-(9Z,12Z-octadecadienoyl)-glycerol + (9Z)-octadecenoyl-CoA = 1-(9Z,12Z-octadecadienoyl)-2-(9Z-octadecenoyl)-glycerol + CoA. The enzyme catalyses 1-(9Z,12Z,15Z-octadecatrienoyl)-glycerol + (9Z)-octadecenoyl-CoA = 1-(9Z,12Z,15Z-octadecatrienoyl)-2-(9Z-octadecenoyl)-glycerol + CoA. The catalysed reaction is 1-(5Z,8Z,11Z,14Z-eicosatetraenoyl)-glycerol + (9Z)-octadecenoyl-CoA = 1-(5Z,8Z,11Z,14Z-eicosatetraenoyl)-2-(9Z-octadecenoyl)-glycerol + CoA. It carries out the reaction a 1-acylglycerol + an acyl-CoA = a 1,3-diacylglycerol + CoA. It catalyses the reaction 1-dodecanoylglycerol + (9Z)-octadecenoyl-CoA = 1-dodecanoyl-3-(9Z-octadecenoyl)-glycerol + CoA. The enzyme catalyses 1-hexadecanoylglycerol + (9Z)-octadecenoyl-CoA = 1-(9Z-octadecenoyl)-3-hexadecanoylglycerol + CoA. The catalysed reaction is 1-octadecanoylglycerol + (9Z)-octadecenoyl-CoA = 1-octadecanoyl-3-(9Z-octadecenoyl)-glycerol + CoA. It carries out the reaction 1-(9Z-octadecenoyl)-sn-glycerol + (9Z)-octadecenoyl-CoA = 1,3-di-(9Z-octadecenoyl)-glycerol + CoA. It catalyses the reaction 1-(9Z,12Z-octadecadienoyl)-glycerol + (9Z)-octadecenoyl-CoA = 1-(9Z-octadecenoyl)-3-(9Z,12Z-octadecadienoyl)-glycerol + CoA. The enzyme catalyses 1-(9Z,12Z,15Z-octadecatrienoyl)-glycerol + (9Z)-octadecenoyl-CoA = 1-(9Z,12Z,15Z-octadecatrienoyl)-3-(9Z-octadecenoyl)-glycerol + CoA. The catalysed reaction is a 1-acyl-sn-glycerol + an acyl-CoA = a 1,3-diacyl-sn-glycerol + CoA. It carries out the reaction a 3-acyl-sn-glycerol + an acyl-CoA = a 1,3-diacyl-sn-glycerol + CoA. It catalyses the reaction 3-octadecanoyl-sn-glycerol + (9Z)-octadecenoyl-CoA = 1-(9Z-octadecenoyl)-3-octadecanoyl-sn-glycerol + CoA. It functions in the pathway glycerolipid metabolism; triacylglycerol biosynthesis. Functionally, involved in glycerolipid synthesis and lipid metabolism. Catalyzes the formation of diacylglycerol, the precursor of triacylglycerol, by transferring the acyl chain of a fatty acyl-CoA to a monoacylglycerol, mainly at the sn-1 or sn-3 positions. It uses both sn-2-monoacylglycerol (2-acylglycerol) and sn-1-monoacylglycerol (1-acyl-sn-glycerol) equally well as substrates, and uses sn-3-monoacylglycerol (3-acyl-sn-glycerol) with lower efficiency. Probably not involved in absorption of dietary fat in the small intestine. This chain is 2-acylglycerol O-acyltransferase 1, found in Homo sapiens (Human).